The following is a 693-amino-acid chain: CREB-regulated transcription coactivator 2 (693 aa).

A compositionally biased stretch (polar residues) spans 1-20 (MATSGANGPGSATASASNPR). Residues 1-30 (MATSGANGPGSATASASNPRKFSEKIALQK) form a disordered region. The residue at position 2 (Ala-2) is an N-acetylalanine. Position 51 is an asymmetric dimethylarginine; by PRMT6 (Arg-51). 3 positions are modified to phosphoserine: Ser-70, Ser-86, and Ser-90. Residues Arg-99, Arg-120, and Arg-123 each carry the asymmetric dimethylarginine; by PRMT6 modification. At Ser-136 the chain carries Phosphoserine. 2 positions are modified to asymmetric dimethylarginine; by PRMT6: Arg-161 and Arg-168. Thr-169 is subject to Phosphothreonine. The residue at position 171 (Ser-171) is a Phosphoserine. Positions 174-188 (ALHTSVMNPSPQDTY) are enriched in polar residues. The interval 174–210 (ALHTSVMNPSPQDTYPSPAAPSVLPSRRGGCLDGETD) is disordered. The interval 209-215 (TDSKVPA) is required for interaction with COP1. A Glycyl lysine isopeptide (Lys-Gly) (interchain with G-Cter in SUMO2) cross-link involves residue Lys-234. Residues 271 to 287 (TGGSLPDLTNLHFPPPL) carry the Nuclear export signal motif. Disordered regions lie at residues 271–307 (TGGS…GSST), 335–463 (HSPL…SPTL), and 476–548 (KLPT…QSYH). Residue Ser-274 is modified to Phosphoserine; by MARK2. Position 306 is a phosphoserine (Ser-306). Residues 339–351 (SHPSFQSSLSNPN) are compositionally biased toward polar residues. 2 stretches are compositionally biased toward low complexity: residues 352 to 378 (LQAS…SSLA) and 386 to 424 (SLGH…PGAS). Phosphoserine is present on residues Ser-368, Ser-393, Ser-433, and Ser-456. A compositionally biased stretch (polar residues) spans 447-463 (SQQQLPKQFSPTMSPTL). Tyr-488 carries the post-translational modification Phosphotyrosine. Residues Ser-489 and Ser-492 each carry the phosphoserine modification. A Phosphothreonine modification is found at Thr-501. Phosphoserine occurs at positions 613 and 624.

This sequence belongs to the TORC family. In terms of assembly, binds, as a tetramer, through its N-terminal region, with the bZIP domain of CREB1. 'Arg-314' in the bZIP domain of CREB1 is essential for this interaction. Interaction, via its C-terminal, with TAF4, enhances recruitment of TAF4 to CREB1. Interacts with SIK2. Interacts with 14-3-3 proteins, YWHAB and YWHAG. Interacts (probably when phosphorylated at Ser-171) with YWHAE. Interacts with calmodulin-dependent catalytic subunit PPP3CA/calcineurin A. Interaction with COP1 mediates nuclear export and degradation of CRTC2. In terms of processing, phosphorylation/dephosphorylation states of Ser-171 are required for regulating transduction of CREB activity. CRTCs/TORCs are inactive when phosphorylated, and active when dephosphorylated at this site. This primary site of phosphorylation, is regulated by cAMP and calcium levels and is dependent on the phosphorylation of SIKs (SIK1 and SIK2) by LKB1. Following adenylyl cyclase activation, dephosphorylated at Ser-171 by PPP3CA/calcineurin A resulting in CRTC2 dissociation from 14-3-3 proteins and PPP3CA. Both insulin and AMPK increase this phosphorylation of CRTC2 while glucagon suppresses it. Phosphorylation at Ser-274 by MARK2 is induced under low glucose conditions and dephosphorylated in response to glucose influx. Phosphorylation at Ser-274 promotes interaction with 14-3-3 proteins and translocation to the cytoplasm. Asymmetric dimethylation of arginine resisues by PRMT6 enhances the association of CRTC2 with CREB on the promoters of gluconeogenic genes.

The protein localises to the cytoplasm. It is found in the nucleus. Functionally, transcriptional coactivator for CREB1 which activates transcription through both consensus and variant cAMP response element (CRE) sites. Acts as a coactivator, in the SIK/TORC signaling pathway, being active when dephosphorylated and acts independently of CREB1 'Ser-133' phosphorylation. Enhances the interaction of CREB1 with TAF4. Regulates gluconeogenesis as a component of the LKB1/AMPK/TORC2 signaling pathway. Regulates the expression of specific genes such as the steroidogenic gene, StAR. Potent coactivator of PPARGC1A and inducer of mitochondrial biogenesis in muscle cells. The sequence is that of CREB-regulated transcription coactivator 2 (CRTC2) from Bos taurus (Bovine).